A 296-amino-acid polypeptide reads, in one-letter code: 4-hydroxy-tetrahydrodipicolinate synthase (296 aa).

A pyruvate-binding site is contributed by T49. The Proton donor/acceptor role is filled by Y137. K165 serves as the catalytic Schiff-base intermediate with substrate. Position 208 (I208) interacts with pyruvate.

The protein belongs to the DapA family. In terms of assembly, homotetramer; dimer of dimers.

The protein localises to the cytoplasm. It carries out the reaction L-aspartate 4-semialdehyde + pyruvate = (2S,4S)-4-hydroxy-2,3,4,5-tetrahydrodipicolinate + H2O + H(+). It functions in the pathway amino-acid biosynthesis; L-lysine biosynthesis via DAP pathway; (S)-tetrahydrodipicolinate from L-aspartate: step 3/4. Catalyzes the condensation of (S)-aspartate-beta-semialdehyde [(S)-ASA] and pyruvate to 4-hydroxy-tetrahydrodipicolinate (HTPA). In Ehrlichia canis (strain Jake), this protein is 4-hydroxy-tetrahydrodipicolinate synthase.